Here is a 318-residue protein sequence, read N- to C-terminus: NADH-ubiquinone oxidoreductase chain 1 (318 aa).

8 consecutive transmembrane segments (helical) span residues 2-22 (FMINILMLIIPILLAVAFLTL), 70-90 (MFILAPIMALGLALTMWIPLP), 100-120 (LGVLFMLAMSSLAVYSILWSG), 147-167 (AIILLSVLLMSGSFTLSTLII), 172-192 (MWLILPAWPLAMMWFISTLAE), 222-242 (LFFMAEYANIIMMNIFTAILF), 253-273 (ELYTINFTIKSLLLTMSFLWI), and 294-314 (LPLTLALCMWHVSLPILTSGI).

This sequence belongs to the complex I subunit 1 family. In terms of assembly, core subunit of respiratory chain NADH dehydrogenase (Complex I) which is composed of 45 different subunits.

It localises to the mitochondrion inner membrane. It catalyses the reaction a ubiquinone + NADH + 5 H(+)(in) = a ubiquinol + NAD(+) + 4 H(+)(out). In terms of biological role, core subunit of the mitochondrial membrane respiratory chain NADH dehydrogenase (Complex I) which catalyzes electron transfer from NADH through the respiratory chain, using ubiquinone as an electron acceptor. Essential for the catalytic activity and assembly of complex I. The sequence is that of NADH-ubiquinone oxidoreductase chain 1 (MT-ND1) from Bos indicus (Zebu).